Consider the following 651-residue polypeptide: UvrABC system protein C (651 aa).

The GIY-YIG domain maps to 21–100 (TEPGCYLMRD…IKNQQPHFNV (80 aa)). The UVR domain occupies 210–245 (DELRQLLNQQMERYAERLDFESAARIRDQLQGIDQL).

The protein belongs to the UvrC family. Interacts with UvrB in an incision complex.

Its subcellular location is the cytoplasm. Functionally, the UvrABC repair system catalyzes the recognition and processing of DNA lesions. UvrC both incises the 5' and 3' sides of the lesion. The N-terminal half is responsible for the 3' incision and the C-terminal half is responsible for the 5' incision. The polypeptide is UvrABC system protein C (Synechococcus sp. (strain CC9311)).